The following is a 312-amino-acid chain: Protein lon-1 (312 aa).

A signal peptide spans 1 to 18 (MNYLLTALIALLAPISVA). Positions 87–209 (EHNRYRRMVP…GHRNVFVCHY (123 aa)) constitute an SCP domain. N142 is a glycosylation site (N-linked (GlcNAc...) asparagine). Over residues 265–284 (TTTTESTTTSTTTEEPTTTC) the composition is skewed to low complexity. Residues 265-312 (TTTTESTTTSTTTEEPTTTCEPDEPEAEGADNNQEEEEENNDGFRMRV) form a disordered region. Acidic residues predominate over residues 285–305 (EPDEPEAEGADNNQEEEEENN).

Belongs to the CRISP family. Expressed in hypodermal tissues.

In terms of biological role, regulates body size morphogenesis, but does not affect male tail development. The protein is Protein lon-1 (lon-1) of Caenorhabditis elegans.